A 621-amino-acid chain; its full sequence is Proton pump-interactor BIP131 (621 aa).

A coiled-coil region spans residues 250–305 (IDEVKRDRQAVRDKIKVLEDQIHAVDGEIAALQDDLTAATARKDKAFEALNELRKT). Over residues 374–387 (SRDGRMRNPDEKPI) the composition is skewed to basic and acidic residues. The interval 374–572 (SRDGRMRNPD…RSTVTKTKTP (199 aa)) is disordered. Residues 430-441 (KAPAKAAKAKQP) are compositionally biased toward low complexity. Positions 448–516 (PDVHDDEPPK…AEKKLKEKEK (69 aa)) are enriched in basic and acidic residues. Positions 466–524 (EAKLKEMKRQEEIEKNKLALERKKKQAEKQAMKAAARAEKEAEKKLKEKEKKARKRSAT) form a coiled coil. The helical transmembrane segment at 589 to 609 (WGAPMAALAAALVALLGALVY) threads the bilayer.

The protein belongs to the plant proton pump-interactor protein family. In terms of assembly, interacts with BRI1.

It localises to the cell membrane. Its function is as follows. May regulate plasma membrane ATPase activity. This is Proton pump-interactor BIP131 from Oryza sativa subsp. japonica (Rice).